The following is a 156-amino-acid chain: Transcriptional repressor NrdR (156 aa).

Residues 3-34 (CPFCHSDNDKVQDSRTAEAGYVVRRKRLCQTC) fold into a zinc finger. The ATP-cone domain occupies 49–139 (VRVVKSDETR…VYRDFDDAKD (91 aa)).

This sequence belongs to the NrdR family. Zn(2+) serves as cofactor.

In terms of biological role, negatively regulates transcription of bacterial ribonucleotide reductase nrd genes and operons by binding to NrdR-boxes. The chain is Transcriptional repressor NrdR from Rhodopirellula baltica (strain DSM 10527 / NCIMB 13988 / SH1).